Consider the following 308-residue polypeptide: 1D-myo-inositol 2-acetamido-2-deoxy-alpha-D-glucopyranoside deacetylase (308 aa).

The Zn(2+) site is built by H37, D40, and H171.

Belongs to the MshB deacetylase family. It depends on Zn(2+) as a cofactor.

It carries out the reaction 1D-myo-inositol 2-acetamido-2-deoxy-alpha-D-glucopyranoside + H2O = 1D-myo-inositol 2-amino-2-deoxy-alpha-D-glucopyranoside + acetate. In terms of biological role, catalyzes the deacetylation of 1D-myo-inositol 2-acetamido-2-deoxy-alpha-D-glucopyranoside (GlcNAc-Ins) in the mycothiol biosynthesis pathway. This Mycobacterium sp. (strain JLS) protein is 1D-myo-inositol 2-acetamido-2-deoxy-alpha-D-glucopyranoside deacetylase.